The chain runs to 338 residues: UPF0324 membrane protein TauZ (338 aa).

9 consecutive transmembrane segments (helical) span residues 36–55 (YGAP…NFLA), 75–92 (LGVA…LAAL), 96–118 (AIAL…SRLV), 125–147 (ALLT…AAVL), 162–184 (LSVT…LFGF), 223–245 (LIRV…ARGL), 255–277 (PLLP…GLIP), 290–309 (WALL…GKML), and 314–336 (GAIA…GLHL).

It belongs to the UPF0324 family.

It is found in the cell membrane. The protein is UPF0324 membrane protein TauZ (tauZ) of Paracoccus pantotrophus (Thiosphaera pantotropha).